We begin with the raw amino-acid sequence, 279 residues long: Oxygen-dependent coproporphyrinogen-III oxidase (279 aa).

Ser-102 provides a ligand contact to substrate. A divalent metal cation is bound by residues His-106 and His-116. The Proton donor role is filled by His-116. 118-120 serves as a coordination point for substrate; the sequence is NTR. Residues His-149 and His-179 each coordinate a divalent metal cation. The tract at residues 244 to 279 is important for dimerization; it reads YVEFNLLYDRGTKFGLMTDGNIEAILMSLPPVVKFN.

The protein belongs to the aerobic coproporphyrinogen-III oxidase family. As to quaternary structure, homodimer. The cofactor is a divalent metal cation.

It is found in the cytoplasm. It catalyses the reaction coproporphyrinogen III + O2 + 2 H(+) = protoporphyrinogen IX + 2 CO2 + 2 H2O. Its pathway is porphyrin-containing compound metabolism; protoporphyrin-IX biosynthesis; protoporphyrinogen-IX from coproporphyrinogen-III (O2 route): step 1/1. Involved in the heme biosynthesis. Catalyzes the aerobic oxidative decarboxylation of propionate groups of rings A and B of coproporphyrinogen-III to yield the vinyl groups in protoporphyrinogen-IX. The chain is Oxygen-dependent coproporphyrinogen-III oxidase from Rickettsia typhi (strain ATCC VR-144 / Wilmington).